The following is a 283-amino-acid chain: Co-chaperone protein DjlA (283 aa).

At 1–6 (MQIFGK) the chain is on the periplasmic side. Residues 7–30 (ILGGFFGFLFGGFFGAALGIFIGH) traverse the membrane as a helical segment. At 31–283 (QFDKAKRMAN…DLIKKEKGIK (253 aa)) the chain is on the cytoplasmic side. Residues 188–197 (QGGGFSGHQS) are compositionally biased toward gly residues. The interval 188 to 210 (QGGGFSGHQSGGSHQQGQWQQAS) is disordered. Over residues 198 to 210 (GGSHQQGQWQQAS) the composition is skewed to low complexity. The J domain occupies 217 to 283 (DAYNLLGISE…DLIKKEKGIK (67 aa)).

As to quaternary structure, homodimer.

It is found in the cell inner membrane. In terms of biological role, regulatory DnaK co-chaperone. Direct interaction between DnaK and DjlA is needed for the induction of the wcaABCDE operon, involved in the synthesis of a colanic acid polysaccharide capsule, possibly through activation of the RcsB/RcsC phosphotransfer signaling pathway. The colanic acid capsule may help the bacterium survive conditions outside the host. This chain is Co-chaperone protein DjlA, found in Aliivibrio fischeri (strain ATCC 700601 / ES114) (Vibrio fischeri).